Here is a 150-residue protein sequence, read N- to C-terminus: Ribosomal RNA large subunit methyltransferase H (150 aa).

S-adenosyl-L-methionine-binding positions include Ala100 and 118 to 123 (LSEMTF).

Belongs to the RNA methyltransferase RlmH family. Homodimer.

It is found in the cytoplasm. It catalyses the reaction pseudouridine(1915) in 23S rRNA + S-adenosyl-L-methionine = N(3)-methylpseudouridine(1915) in 23S rRNA + S-adenosyl-L-homocysteine + H(+). Functionally, specifically methylates the pseudouridine at position 1915 (m3Psi1915) in 23S rRNA. This Helicobacter pylori (strain Shi470) protein is Ribosomal RNA large subunit methyltransferase H.